The chain runs to 343 residues: Holliday junction branch migration complex subunit RuvB (343 aa).

The tract at residues M1 to R23 is disordered. Positions M1 to Y183 are large ATPase domain (RuvB-L). ATP-binding positions include L22, R23, G64, K67, T68, T69, E130–Y132, R173, Y183, and R220. T68 serves as a coordination point for Mg(2+). The tract at residues S184 to N254 is small ATPAse domain (RuvB-S). The segment at G257–D343 is head domain (RuvB-H). 2 residues coordinate DNA: R312 and R317.

Belongs to the RuvB family. In terms of assembly, homohexamer. Forms an RuvA(8)-RuvB(12)-Holliday junction (HJ) complex. HJ DNA is sandwiched between 2 RuvA tetramers; dsDNA enters through RuvA and exits via RuvB. An RuvB hexamer assembles on each DNA strand where it exits the tetramer. Each RuvB hexamer is contacted by two RuvA subunits (via domain III) on 2 adjacent RuvB subunits; this complex drives branch migration. In the full resolvosome a probable DNA-RuvA(4)-RuvB(12)-RuvC(2) complex forms which resolves the HJ.

The protein localises to the cytoplasm. The catalysed reaction is ATP + H2O = ADP + phosphate + H(+). The RuvA-RuvB-RuvC complex processes Holliday junction (HJ) DNA during genetic recombination and DNA repair, while the RuvA-RuvB complex plays an important role in the rescue of blocked DNA replication forks via replication fork reversal (RFR). RuvA specifically binds to HJ cruciform DNA, conferring on it an open structure. The RuvB hexamer acts as an ATP-dependent pump, pulling dsDNA into and through the RuvAB complex. RuvB forms 2 homohexamers on either side of HJ DNA bound by 1 or 2 RuvA tetramers; 4 subunits per hexamer contact DNA at a time. Coordinated motions by a converter formed by DNA-disengaged RuvB subunits stimulates ATP hydrolysis and nucleotide exchange. Immobilization of the converter enables RuvB to convert the ATP-contained energy into a lever motion, pulling 2 nucleotides of DNA out of the RuvA tetramer per ATP hydrolyzed, thus driving DNA branch migration. The RuvB motors rotate together with the DNA substrate, which together with the progressing nucleotide cycle form the mechanistic basis for DNA recombination by continuous HJ branch migration. Branch migration allows RuvC to scan DNA until it finds its consensus sequence, where it cleaves and resolves cruciform DNA. The sequence is that of Holliday junction branch migration complex subunit RuvB from Treponema denticola (strain ATCC 35405 / DSM 14222 / CIP 103919 / JCM 8153 / KCTC 15104).